The following is a 271-amino-acid chain: Aquaporin-1 (271 aa).

Residues 1–11 (MASEFKKKLFW) lie on the Cytoplasmic side of the membrane. A helical transmembrane segment spans residues 12 to 29 (RAVVAEFLAMILFVFISI). The Extracellular portion of the chain corresponds to 30-48 (GSALGFNYPVRNNQTAGAA). N-linked (GlcNAc...) asparagine glycosylation occurs at Asn-42. The chain crosses the membrane as a helical span at residues 49–67 (QDNVKVSLAFGLSIATLAQ). The Cytoplasmic portion of the chain corresponds to 68-70 (SVG). An intramembrane segment occupies 71–84 (HISGAHLNPAVTLG). An NPA 1 motif is present at residues 78–80 (NPA). At 85 to 92 (LLLSCQIS) the chain is on the cytoplasmic side. A helical transmembrane segment spans residues 93–111 (ILRAVMYIIAQCVGAIVAT). Topologically, residues 112 to 135 (AILSGITSSLPDNSLGRNELAPGV) are extracellular. Residues 136 to 155 (NSGQGLGIEIIGTLQLVLCV) traverse the membrane as a helical segment. At 156-165 (LATTDRRRRD) the chain is on the cytoplasmic side. Residues 166 to 183 (LGGSGPLAIGLSVALGHL) form a helical membrane-spanning segment. At 184-188 (LAIDY) the chain is on the extracellular side. The stretch at 189–201 (TGCGINPARSFGS) is an intramembrane region. The NPA 2 signature appears at 194 to 196 (NPA). Residues 202-208 (SVITHNF) lie on the Extracellular side of the membrane. The chain crosses the membrane as a helical span at residues 209 to 226 (KDHWIFWVGPFIGGALAV). Topologically, residues 227 to 271 (LIYDFILAPRSSDLTDRVKVWTSGQVEEYELDGDDINSRVEMKPK) are cytoplasmic. A Phosphoserine modification is found at Ser-249. At Tyr-255 the chain carries Phosphotyrosine. Ser-264 bears the Phosphoserine mark.

It belongs to the MIP/aquaporin (TC 1.A.8) family. Homotetramer; each monomer provides an independent water pore. Component of the ankyrin-1 complex in the erythrocyte, composed of ANK1, RHCE, RHAG, SLC4A1, EPB42, GYPA, GYPB and AQP1. Interacts with EPHB2; involved in endolymph production in the inner ear. Identified in a complex with STOM. Interacts (via the N-terminal) with ANK1 (via ANK 1-5 repeats). Interacts (via the C-terminal) with EPB42.

The protein localises to the cell membrane. It carries out the reaction H2O(in) = H2O(out). The enzyme catalyses nitric oxide(out) = nitric oxide(in). The catalysed reaction is CO2(out) = CO2(in). It catalyses the reaction glycerol(in) = glycerol(out). It carries out the reaction H2O2(out) = H2O2(in). The enzyme catalyses K(+)(in) = K(+)(out). The catalysed reaction is Na(+)(in) = Na(+)(out). Forms a water channel that facilitates the transport of water across cell membranes, playing a crucial role in water homeostasis in various tissues. Could also be permeable to small solutes including hydrogen peroxide, glycerol and gases such as amonnia (NH3), nitric oxide (NO) and carbon dioxide (CO2). Recruited to the ankyrin-1 complex, a multiprotein complex of the erythrocyte membrane, it could be part of a CO2 metabolon, linking facilitated diffusion of CO2 across the membrane, anion exchange of Cl(-)/HCO3(-) and interconversion of dissolved CO2 and carbonic acid in the cytosol. In vitro, it shows non-selective gated cation channel activity and may be permeable to cations like K(+) and Na(+) in vivo. The sequence is that of Aquaporin-1 from Canis lupus familiaris (Dog).